A 118-amino-acid polypeptide reads, in one-letter code: Basic phospholipase A2 nigexine (118 aa).

Intrachain disulfides connect Cys11–Cys70, Cys26–Cys117, Cys28–Cys44, Cys43–Cys98, Cys50–Cys91, Cys59–Cys84, and Cys77–Cys89. Tyr27, Gly29, and Gly31 together coordinate Ca(2+). His47 is a catalytic residue. Asp48 serves as a coordination point for Ca(2+). A Coagulation factor Xa binding motif motif is present at residues 52-69; that stretch reads EKAGKMGCWPYFTLYKYK. Asp92 is a catalytic residue.

Belongs to the phospholipase A2 family. Group I subfamily. D49 sub-subfamily. Ca(2+) is required as a cofactor. In terms of tissue distribution, expressed by the venom gland.

It is found in the secreted. The catalysed reaction is a 1,2-diacyl-sn-glycero-3-phosphocholine + H2O = a 1-acyl-sn-glycero-3-phosphocholine + a fatty acid + H(+). Its function is as follows. Snake venom phospholipase A2 (PLA2) that shows anticoagulant activity, has cytotoxic activity and affects neuromuscular transmission in vitro. PLA2 catalyzes the calcium-dependent hydrolysis of the 2-acyl groups in 3-sn-phosphoglycerides. In Naja pallida (Red spitting cobra), this protein is Basic phospholipase A2 nigexine.